The primary structure comprises 182 residues: Transcription termination/antitermination protein NusG (182 aa).

It belongs to the NusG family.

Its function is as follows. Participates in transcription elongation, termination and antitermination. The polypeptide is Transcription termination/antitermination protein NusG (Chlamydia pneumoniae (Chlamydophila pneumoniae)).